The sequence spans 274 residues: Putative phosphoenolpyruvate synthase regulatory protein (274 aa).

Gly-157 to Thr-164 is a binding site for ADP.

Belongs to the pyruvate, phosphate/water dikinase regulatory protein family. PSRP subfamily.

It catalyses the reaction [pyruvate, water dikinase] + ADP = [pyruvate, water dikinase]-phosphate + AMP + H(+). The enzyme catalyses [pyruvate, water dikinase]-phosphate + phosphate + H(+) = [pyruvate, water dikinase] + diphosphate. Functionally, bifunctional serine/threonine kinase and phosphorylase involved in the regulation of the phosphoenolpyruvate synthase (PEPS) by catalyzing its phosphorylation/dephosphorylation. This Bordetella avium (strain 197N) protein is Putative phosphoenolpyruvate synthase regulatory protein.